Here is a 592-residue protein sequence, read N- to C-terminus: Putative esterase (592 aa).

The chain crosses the membrane as a helical span at residues 12 to 32; the sequence is LTLIAYLSVLMGVSVYFYVLI. N-linked (GlcNAc...) asparagine; by host glycosylation is found at asparagine 68, asparagine 83, asparagine 95, asparagine 447, and asparagine 510. Residue histidine 513 is the Charge relay system of the active site. Asparagine 528 carries N-linked (GlcNAc...) asparagine; by host glycosylation.

It belongs to the type-B carboxylesterase/lipase family.

Its subcellular location is the membrane. The catalysed reaction is a carboxylic ester + H2O = an alcohol + a carboxylate + H(+). This chain is Putative esterase, found in Spodoptera frugiperda (Fall armyworm).